A 132-amino-acid chain; its full sequence is Large ribosomal subunit protein uL14 (132 aa).

Belongs to the universal ribosomal protein uL14 family. Part of the 50S ribosomal subunit. Forms a cluster with proteins L3 and L24e, part of which may contact the 16S rRNA in 2 intersubunit bridges.

In terms of biological role, binds to 23S rRNA. Forms part of two intersubunit bridges in the 70S ribosome. This Halobacterium salinarum (strain ATCC 29341 / DSM 671 / R1) protein is Large ribosomal subunit protein uL14.